The chain runs to 132 residues: Fatty acid-binding protein, intestinal (132 aa).

At A2 the chain carries N-acetylalanine. Residues W83 and R107 each contribute to the hexadecanoate site. 2 residues coordinate tetradecanoate: W83 and R107.

It belongs to the calycin superfamily. Fatty-acid binding protein (FABP) family. In terms of tissue distribution, expressed in the small intestine and at much lower levels in the large intestine. Highest expression levels in the jejunum.

Its subcellular location is the cytoplasm. Functionally, FABPs are thought to play a role in the intracellular transport of long-chain fatty acids and their acyl-CoA esters. FABP2 is probably involved in triglyceride-rich lipoprotein synthesis. Binds saturated long-chain fatty acids with a high affinity, but binds with a lower affinity to unsaturated long-chain fatty acids. FABP2 may also help maintain energy homeostasis by functioning as a lipid sensor. The protein is Fatty acid-binding protein, intestinal (FABP2) of Homo sapiens (Human).